Here is a 189-residue protein sequence, read N- to C-terminus: Photosystem I assembly protein Ycf4 (189 aa).

2 helical membrane-spanning segments follow: residues 25-45 (SVYF…LAGL) and 62-82 (LVFI…SLAG).

The protein belongs to the Ycf4 family.

It localises to the cellular thylakoid membrane. Seems to be required for the assembly of the photosystem I complex. The sequence is that of Photosystem I assembly protein Ycf4 from Synechococcus sp. (strain JA-3-3Ab) (Cyanobacteria bacterium Yellowstone A-Prime).